The following is a 615-amino-acid chain: DNA mismatch repair protein MutL (615 aa).

The disordered stretch occupies residues F363–Y397. The span at A364 to P391 shows a compositional bias: low complexity.

The protein belongs to the DNA mismatch repair MutL/HexB family.

Functionally, this protein is involved in the repair of mismatches in DNA. It is required for dam-dependent methyl-directed DNA mismatch repair. May act as a 'molecular matchmaker', a protein that promotes the formation of a stable complex between two or more DNA-binding proteins in an ATP-dependent manner without itself being part of a final effector complex. In Shigella boydii serotype 18 (strain CDC 3083-94 / BS512), this protein is DNA mismatch repair protein MutL.